A 211-amino-acid chain; its full sequence is 2,3-bisphosphoglycerate-dependent phosphoglycerate mutase (211 aa).

Residues 9–16 (RHGQSEWN), 22–23 (TG), Arg-61, 88–91 (ERDY), Lys-99, 115–116 (RR), and 159–160 (GN) each bind substrate. Catalysis depends on His-10, which acts as the Tele-phosphohistidine intermediate. The Proton donor/acceptor role is filled by Glu-88.

It belongs to the phosphoglycerate mutase family. BPG-dependent PGAM subfamily. Homodimer.

It catalyses the reaction (2R)-2-phosphoglycerate = (2R)-3-phosphoglycerate. The protein operates within carbohydrate degradation; glycolysis; pyruvate from D-glyceraldehyde 3-phosphate: step 3/5. Its function is as follows. Catalyzes the interconversion of 2-phosphoglycerate and 3-phosphoglycerate. In Sinorhizobium fredii (strain NBRC 101917 / NGR234), this protein is 2,3-bisphosphoglycerate-dependent phosphoglycerate mutase.